Reading from the N-terminus, the 185-residue chain is Peptidyl-tRNA hydrolase (185 aa).

Y14 contributes to the tRNA binding site. The active-site Proton acceptor is H19. 3 residues coordinate tRNA: Y64, N66, and N112.

Belongs to the PTH family. In terms of assembly, monomer.

The protein localises to the cytoplasm. It carries out the reaction an N-acyl-L-alpha-aminoacyl-tRNA + H2O = an N-acyl-L-amino acid + a tRNA + H(+). Hydrolyzes ribosome-free peptidyl-tRNAs (with 1 or more amino acids incorporated), which drop off the ribosome during protein synthesis, or as a result of ribosome stalling. Functionally, catalyzes the release of premature peptidyl moieties from peptidyl-tRNA molecules trapped in stalled 50S ribosomal subunits, and thus maintains levels of free tRNAs and 50S ribosomes. This is Peptidyl-tRNA hydrolase from Pediococcus pentosaceus (strain ATCC 25745 / CCUG 21536 / LMG 10740 / 183-1w).